The primary structure comprises 627 residues: 1-deoxy-D-xylulose-5-phosphate synthase (627 aa).

Thiamine diphosphate is bound by residues histidine 76 and 117–119 (SHA). Mg(2+) is bound at residue aspartate 148. Thiamine diphosphate-binding positions include 149–150 (GA), asparagine 178, phenylalanine 288, and glutamate 370. Residue asparagine 178 coordinates Mg(2+).

This sequence belongs to the transketolase family. DXPS subfamily. Homodimer. Requires Mg(2+) as cofactor. The cofactor is thiamine diphosphate.

It catalyses the reaction D-glyceraldehyde 3-phosphate + pyruvate + H(+) = 1-deoxy-D-xylulose 5-phosphate + CO2. It functions in the pathway metabolic intermediate biosynthesis; 1-deoxy-D-xylulose 5-phosphate biosynthesis; 1-deoxy-D-xylulose 5-phosphate from D-glyceraldehyde 3-phosphate and pyruvate: step 1/1. Its function is as follows. Catalyzes the acyloin condensation reaction between C atoms 2 and 3 of pyruvate and glyceraldehyde 3-phosphate to yield 1-deoxy-D-xylulose-5-phosphate (DXP). The sequence is that of 1-deoxy-D-xylulose-5-phosphate synthase from Cutibacterium acnes (strain DSM 16379 / KPA171202) (Propionibacterium acnes).